The primary structure comprises 271 residues: MKI67 FHA domain-interacting nucleolar phosphoprotein (271 aa).

A disordered region spans residues methionine 1–serine 20. Alanine 2 is subject to N-acetylalanine. A Glycyl lysine isopeptide (Lys-Gly) (interchain with G-Cter in SUMO2) cross-link involves residue lysine 37. In terms of domain architecture, RRM spans glycine 44–arginine 122. Omega-N-methylarginine is present on arginine 113. Residues lysine 178 and lysine 191 each participate in a glycyl lysine isopeptide (Lys-Gly) (interchain with G-Cter in SUMO2) cross-link. Threonine 213 and threonine 217 each carry phosphothreonine. Residues arginine 223 and arginine 224 each carry the omega-N-methylated arginine modification. A Phosphoserine modification is found at serine 226. The segment at proline 242–glutamine 271 is disordered. Lysine 247 is covalently cross-linked (Glycyl lysine isopeptide (Lys-Gly) (interchain with G-Cter in SUMO1); alternate). A Glycyl lysine isopeptide (Lys-Gly) (interchain with G-Cter in SUMO2); alternate cross-link involves residue lysine 247. Positions lysine 261–glutamine 271 are enriched in basic residues.

As to quaternary structure, binds to the FHA domain of MKI67; this interaction is enhanced in mitosis. In terms of processing, phosphorylated.

The protein localises to the nucleus. The protein resides in the nucleolus. It is found in the chromosome. The sequence is that of MKI67 FHA domain-interacting nucleolar phosphoprotein (Nifk) from Rattus norvegicus (Rat).